We begin with the raw amino-acid sequence, 500 residues long: 2-isopropylmalate synthase (500 aa).

Residues 5 to 266 (LFIFDTTLRD…ITNITTNKIY (262 aa)) enclose the Pyruvate carboxyltransferase domain. Residues Asp14, His202, His204, and Asn238 each coordinate Mn(2+). A regulatory domain region spans residues 389-500 (KLEYLQVTSG…VDAINKFIVD (112 aa)).

Belongs to the alpha-IPM synthase/homocitrate synthase family. LeuA type 1 subfamily. As to quaternary structure, homodimer. It depends on Mn(2+) as a cofactor.

The protein resides in the cytoplasm. It catalyses the reaction 3-methyl-2-oxobutanoate + acetyl-CoA + H2O = (2S)-2-isopropylmalate + CoA + H(+). It participates in amino-acid biosynthesis; L-leucine biosynthesis; L-leucine from 3-methyl-2-oxobutanoate: step 1/4. In terms of biological role, catalyzes the condensation of the acetyl group of acetyl-CoA with 3-methyl-2-oxobutanoate (2-ketoisovalerate) to form 3-carboxy-3-hydroxy-4-methylpentanoate (2-isopropylmalate). This is 2-isopropylmalate synthase from Parabacteroides distasonis (strain ATCC 8503 / DSM 20701 / CIP 104284 / JCM 5825 / NCTC 11152).